The following is a 424-amino-acid chain: UPF0229 protein YPTS_2141 (424 aa).

Positions 84–109 (TNDRVDRPQGGGGGGSGQGNAGKDGE) are disordered. The span at 92-105 (QGGGGGGSGQGNAG) shows a compositional bias: gly residues.

Belongs to the UPF0229 family.

This is UPF0229 protein YPTS_2141 from Yersinia pseudotuberculosis serotype IB (strain PB1/+).